The primary structure comprises 179 residues: Crossover junction endodeoxyribonuclease RuvC (179 aa).

Active-site residues include D14, E74, and D147. Mg(2+) is bound by residues D14, E74, and D147.

The protein belongs to the RuvC family. Homodimer which binds Holliday junction (HJ) DNA. The HJ becomes 2-fold symmetrical on binding to RuvC with unstacked arms; it has a different conformation from HJ DNA in complex with RuvA. In the full resolvosome a probable DNA-RuvA(4)-RuvB(12)-RuvC(2) complex forms which resolves the HJ. Mg(2+) serves as cofactor.

It localises to the cytoplasm. It carries out the reaction Endonucleolytic cleavage at a junction such as a reciprocal single-stranded crossover between two homologous DNA duplexes (Holliday junction).. The RuvA-RuvB-RuvC complex processes Holliday junction (HJ) DNA during genetic recombination and DNA repair. Endonuclease that resolves HJ intermediates. Cleaves cruciform DNA by making single-stranded nicks across the HJ at symmetrical positions within the homologous arms, yielding a 5'-phosphate and a 3'-hydroxyl group; requires a central core of homology in the junction. The consensus cleavage sequence is 5'-(A/T)TT(C/G)-3'. Cleavage occurs on the 3'-side of the TT dinucleotide at the point of strand exchange. HJ branch migration catalyzed by RuvA-RuvB allows RuvC to scan DNA until it finds its consensus sequence, where it cleaves and resolves the cruciform DNA. The polypeptide is Crossover junction endodeoxyribonuclease RuvC (Rubrobacter xylanophilus (strain DSM 9941 / JCM 11954 / NBRC 16129 / PRD-1)).